The chain runs to 261 residues: 3-methyl-2-oxobutanoate hydroxymethyltransferase (261 aa).

Mg(2+) contacts are provided by Asp-42 and Asp-81. Residues 42-43, Asp-81, and Lys-110 each bind 3-methyl-2-oxobutanoate; that span reads DS. Glu-112 contacts Mg(2+). Glu-179 serves as the catalytic Proton acceptor.

It belongs to the PanB family. Homodecamer; pentamer of dimers. The cofactor is Mg(2+).

The protein resides in the cytoplasm. It carries out the reaction 3-methyl-2-oxobutanoate + (6R)-5,10-methylene-5,6,7,8-tetrahydrofolate + H2O = 2-dehydropantoate + (6S)-5,6,7,8-tetrahydrofolate. It functions in the pathway cofactor biosynthesis; (R)-pantothenate biosynthesis; (R)-pantoate from 3-methyl-2-oxobutanoate: step 1/2. Its function is as follows. Catalyzes the reversible reaction in which hydroxymethyl group from 5,10-methylenetetrahydrofolate is transferred onto alpha-ketoisovalerate to form ketopantoate. This chain is 3-methyl-2-oxobutanoate hydroxymethyltransferase, found in Thermus thermophilus (strain ATCC BAA-163 / DSM 7039 / HB27).